The following is a 299-amino-acid chain: Pyridoxal 5'-phosphate synthase subunit PdxS (299 aa).

D-ribose 5-phosphate is bound at residue Asp-24. The active-site Schiff-base intermediate with D-ribose 5-phosphate is Lys-81. Gly-153 is a binding site for D-ribose 5-phosphate. Position 165 (Arg-165) interacts with D-glyceraldehyde 3-phosphate. D-ribose 5-phosphate is bound by residues Gly-219 and 240–241; that span reads GS.

It belongs to the PdxS/SNZ family. In the presence of PdxT, forms a dodecamer of heterodimers.

The catalysed reaction is aldehydo-D-ribose 5-phosphate + D-glyceraldehyde 3-phosphate + L-glutamine = pyridoxal 5'-phosphate + L-glutamate + phosphate + 3 H2O + H(+). The protein operates within cofactor biosynthesis; pyridoxal 5'-phosphate biosynthesis. In terms of biological role, catalyzes the formation of pyridoxal 5'-phosphate from ribose 5-phosphate (RBP), glyceraldehyde 3-phosphate (G3P) and ammonia. The ammonia is provided by the PdxT subunit. Can also use ribulose 5-phosphate and dihydroxyacetone phosphate as substrates, resulting from enzyme-catalyzed isomerization of RBP and G3P, respectively. The chain is Pyridoxal 5'-phosphate synthase subunit PdxS from Methanococcus maripaludis (strain C7 / ATCC BAA-1331).